Reading from the N-terminus, the 104-residue chain is Ribonuclease P protein component 4 (104 aa).

Positions 57, 60, 83, and 86 each coordinate Zn(2+).

Belongs to the eukaryotic/archaeal RNase P protein component 4 family. Consists of a catalytic RNA component and at least 4-5 protein subunits. Requires Zn(2+) as cofactor.

It is found in the cytoplasm. It catalyses the reaction Endonucleolytic cleavage of RNA, removing 5'-extranucleotides from tRNA precursor.. Its function is as follows. Part of ribonuclease P, a protein complex that generates mature tRNA molecules by cleaving their 5'-ends. The chain is Ribonuclease P protein component 4 from Saccharolobus islandicus (strain M.16.27) (Sulfolobus islandicus).